A 304-amino-acid chain; its full sequence is Calcium release-activated calcium channel protein 1 (304 aa).

Pro residues predominate over residues Met-1 to Asn-11. Positions Met-1 to Pro-49 are disordered. Residues Met-1–Lys-88 are Cytoplasmic-facing. The required for generation of inwardly rectifying CRAC currents stretch occupies residues Pro-3–Pro-49. The span at Ser-12–Ser-27 shows a compositional bias: low complexity. The AKAP5 association region stretch occupies residues Pro-39 to Ser-60. The tract at residues Ser-71–Ser-91 is interaction with STIM1. A helical transmembrane segment spans residues Ala-89 to Val-106. Topologically, residues Glu-107 to Leu-120 are extracellular. Residues Leu-121–Ile-141 form a helical membrane-spanning segment. Topologically, residues Ser-142–Glu-174 are cytoplasmic. Residues Leu-175–Leu-195 traverse the membrane as a helical segment. Residues Cys-196–Ala-237 are Extracellular-facing. The N-linked (GlcNAc...) asparagine glycan is linked to Asn-225. Residues Ala-238–Val-258 traverse the membrane as a helical segment. Over His-259–Ala-304 the chain is Cytoplasmic. An interaction with STIM1 region spans residues Glu-275 to His-295. A Phosphothreonine modification is found at Thr-298.

This sequence belongs to the Orai family. As to quaternary structure, oligomerizes in homomeric and heteromeric ORAI complexes. Native CRAC channels most likely consist of hexameric ORAI heteromers, implying that diverse ORAI1, ORAI2 and ORAI3 subunit combinations with distinct biophysical properties can operate in a cell-type specific way. ARC channels are heteropentamers consisting of three ORAI1 and two ORAI3 subunits. Interacts with STIM1 and STIM2; this regulates channel activity. Interacts with CALM; this may displace STIM1 and STIM2 and might thereby modulate channel activity. Interacts (via N-terminus) with AKAP5 upon store depletion. Interacts with CRACR2A/EFCAB4B; the interaction is direct and takes place in absence of Ca(2+). Forms a complex with CRACR2A/EFCAB4B and STIM1 at low concentration of Ca(2+), the complex dissociates at elevated Ca(2+) concentrations. Interacts with ASPH (isoform 8). Interacts with SLC35G1. Interacts with UBQLN1. Interacts with ADCY8; interaction is calcium store depletion independent; interaction occurs in membrane raft; interaction increases markedly after store depletion; positively regulates SOCE-induced adenylate cyclase activity; contributes to the targeting of ADCY8 to discrete regions of the plasma membrane that are shielded from other calcium events. Interacts with EFHB; the interaction takes place upon Ca(2+)-store depletion. Interacts (via N- and C-termini) with ATP2C2 (via N-terminus); this interaction regulates Ca(2+) influx at the plasma membrane. Interacts with TSPAN18; this interaction regulates ORAI1 exit from the endoplasmic (ER), and/or Golgi, and trafficking to the cell surface. In terms of processing, N-glycosylated. N-glycosylation inhibits channel activity in T cells. Ubiquitinated. Post-translationally, cys-195 is oxidated, leading to inactivation of channel activity.

The protein localises to the cell membrane. The protein resides in the basolateral cell membrane. The enzyme catalyses Ca(2+)(in) = Ca(2+)(out). With respect to regulation, oxidation at Cys-196 leads to inactivation of channel activity. Its function is as follows. Pore-forming subunit of two major inward rectifying Ca(2+) channels at the plasma membrane: Ca(2+) release-activated Ca(2+) (CRAC) channels and arachidonate-regulated Ca(2+)-selective (ARC) channels. Assembles with ORAI2 and ORAI3 to form hexameric CRAC channels that mediate Ca(2+) influx upon depletion of endoplasmic reticulum Ca(2+) store and channel activation by Ca(2+) sensor STIM1, a process known as store-operated Ca(2+) entry (SOCE). Various pore subunit combinations may account for distinct CRAC channel spatiotemporal and cell-type specific dynamics. ORAI1 mainly contributes to the generation of Ca(2+) plateaus involved in sustained Ca(2+) entry and is dispensable for cytosolic Ca(2+) oscillations, whereas ORAI2 and ORAI3 generate oscillatory patterns. CRAC channels assemble in Ca(2+) signaling microdomains where Ca(2+) influx is coupled to calmodulin and calcineurin signaling and activation of NFAT transcription factors recruited to ORAI1 via AKAP5. Activates NFATC2/NFAT1 and NFATC3/NFAT4-mediated transcriptional responses. CRAC channels are the main pathway for Ca(2+) influx in T cells and promote the immune response to pathogens by activating NFAT-dependent cytokine and chemokine transcription. Assembles with ORAI3 to form channels that mediate store-independent Ca(2+) influx in response to inflammatory metabolites arachidonate or its derivative leukotriene C4, termed ARC and LRC channels respectively. Plays a prominent role in Ca(2+) influx at the basolateral membrane of mammary epithelial cells independently of the Ca(2+) content of endoplasmic reticulum or Golgi stores. May mediate transepithelial transport of large quantities of Ca(2+) for milk secretion. This chain is Calcium release-activated calcium channel protein 1 (Orai1), found in Rattus norvegicus (Rat).